The following is a 310-amino-acid chain: Zinc finger protein 346 (310 aa).

An N-acetylmethionine modification is found at Met-1. Residues 1–12 (MEYPAPAAVQAA) are compositionally biased toward low complexity. Positions 1 to 33 (MEYPAPAAVQAADGGGAGPYNSSELLEGQEPDG) are disordered. The segment at 70–104 (FTNTQCKVCCALLISESQKLAHYQSKKHANKVKRY) adopts a Matrin-type 1 zinc-finger fold. Residues Cys-75, Cys-78, His-91, and His-97 each contribute to the Zn(2+) site. Residue Lys-114 forms a Glycyl lysine isopeptide (Lys-Gly) (interchain with G-Cter in SUMO2) linkage. The Matrin-type 2 zinc finger occupies 131–165 (DKNQCCPICNMTFSSPVVAQSHYLGKTHAKNLKLK). Zn(2+)-binding residues include Cys-136, Cys-139, His-152, and His-158. A Glycyl lysine isopeptide (Lys-Gly) (interchain with G-Cter in SUMO2) cross-link involves residue Lys-170. Matrin-type zinc fingers lie at residues 198-232 (DPDK…ETKL) and 252-286 (GKGY…SPKT). The interval 278-310 (KHKNQSPKTVASSLGQIPMQRQPIQKDSTTLED) is disordered. Composition is skewed to polar residues over residues 283-292 (SPKTVASSLG) and 299-310 (QPIQKDSTTLED).

As to quaternary structure, forms a heteromeric complex with XPO5 and ILF3. Found in a nuclear export complex with XPO5, RAN, ILF3, ZNF346 and double-stranded RNA. Interacts with XPO5. Interacts with ILF3 in an RNA-independent manner.

It is found in the nucleus. The protein resides in the nucleolus. Its subcellular location is the cytoplasm. Functionally, binds with low affinity to dsDNA and ssRNA, and with high affinity to dsRNA, with no detectable sequence specificity. The protein is Zinc finger protein 346 (ZNF346) of Pongo abelii (Sumatran orangutan).